Here is a 480-residue protein sequence, read N- to C-terminus: UDP-N-acetylmuramate--L-alanine ligase (480 aa).

122-128 (GTHGKTT) is a binding site for ATP.

It belongs to the MurCDEF family.

The protein localises to the cytoplasm. The catalysed reaction is UDP-N-acetyl-alpha-D-muramate + L-alanine + ATP = UDP-N-acetyl-alpha-D-muramoyl-L-alanine + ADP + phosphate + H(+). It functions in the pathway cell wall biogenesis; peptidoglycan biosynthesis. Functionally, cell wall formation. The chain is UDP-N-acetylmuramate--L-alanine ligase from Pseudomonas aeruginosa (strain LESB58).